A 501-amino-acid chain; its full sequence is MHTRRLVKRSVIGSRVYAPGLTGDAAPLTGVIQAVKQDNRDASTGHRRNVYTVLMQDGSVKEYSEEEIAQMTAKAPLKSSLKSTCNGGQRDGLTQGQNGGVQRGEALSLSPESTEEPRVLEHKRTGRALETEKDHTRSVSLLEQKRKVVSSSIDVPQARKSEEEVDMDKVTAAMVLTSLSTSPLVRSPPVKVSEGLNGSWKDGGFTPSSYSSSGYWSWSAPSDQSNPSTPSPPLSADSFKPFRMPSLSGPPDDNIDEHDGNSLLFDEPIPRKRKNSMKVMFKCLWKNCGKVLSTAAGIQRHIRTVHLGRNCDSECSDGEEDFYYTEIKLNTDSVADGLSSLSPVSPSVLSPPPALDQRQPDGTNGTKSESSSSTPLSRSAPSALYLVHTDHAYQATTPVTIPSTSSTGFTPSSSSFSISWQSPPVTFTGTSASPTHSRTQGFGEQHSQTIAVLSSPPRAAGSLSRKSRGEGKKCRKVYGMENRDMWCTACRWKKACQRFVD.

Positions serine 80–glycine 96 are enriched in polar residues. 3 disordered regions span residues serine 80–serine 138, proline 183–glycine 203, and tryptophan 216–glutamate 267. A compositionally biased stretch (basic and acidic residues) spans glutamate 115 to arginine 137. The C2H2-type zinc finger occupies phenylalanine 281–histidine 306. Disordered regions lie at residues serine 340 to alanine 380, proline 398 to serine 419, phenylalanine 427 to histidine 446, and leucine 453 to lysine 472. Low complexity predominate over residues serine 368–alanine 380. The short motif at lysine 472–lysine 476 is the CR1 element. Positions cysteine 490–lysine 494 match the CR2 motif.

The protein localises to the nucleus. Transcription factor. The polypeptide is Zinc finger protein 704 (znf704) (Danio rerio (Zebrafish)).